Here is a 393-residue protein sequence, read N- to C-terminus: Formate-dependent phosphoribosylglycinamide formyltransferase (393 aa).

N(1)-(5-phospho-beta-D-ribosyl)glycinamide-binding positions include glutamate 17 to leucine 18 and glutamate 77. ATP-binding positions include arginine 109, lysine 150, serine 155–glutamine 160, glutamate 190–leucine 193, and glutamate 198. The ATP-grasp domain occupies aspartate 114–leucine 304. Mg(2+) contacts are provided by glutamate 263 and glutamate 275. Residues aspartate 282, lysine 354, and arginine 361–arginine 362 contribute to the N(1)-(5-phospho-beta-D-ribosyl)glycinamide site.

The protein belongs to the PurK/PurT family. Homodimer.

The enzyme catalyses N(1)-(5-phospho-beta-D-ribosyl)glycinamide + formate + ATP = N(2)-formyl-N(1)-(5-phospho-beta-D-ribosyl)glycinamide + ADP + phosphate + H(+). It participates in purine metabolism; IMP biosynthesis via de novo pathway; N(2)-formyl-N(1)-(5-phospho-D-ribosyl)glycinamide from N(1)-(5-phospho-D-ribosyl)glycinamide (formate route): step 1/1. In terms of biological role, involved in the de novo purine biosynthesis. Catalyzes the transfer of formate to 5-phospho-ribosyl-glycinamide (GAR), producing 5-phospho-ribosyl-N-formylglycinamide (FGAR). Formate is provided by PurU via hydrolysis of 10-formyl-tetrahydrofolate. The polypeptide is Formate-dependent phosphoribosylglycinamide formyltransferase (Synechococcus sp. (strain RCC307)).